The chain runs to 932 residues: 2-oxoglutarate dehydrogenase E1 component (932 aa).

Belongs to the alpha-ketoglutarate dehydrogenase family. In terms of assembly, homodimer. Part of the 2-oxoglutarate dehydrogenase (OGDH) complex composed of E1 (2-oxoglutarate dehydrogenase), E2 (dihydrolipoamide succinyltransferase) and E3 (dihydrolipoamide dehydrogenase); the complex contains multiple copies of the three enzymatic components (E1, E2 and E3). Thiamine diphosphate is required as a cofactor.

It catalyses the reaction N(6)-[(R)-lipoyl]-L-lysyl-[protein] + 2-oxoglutarate + H(+) = N(6)-[(R)-S(8)-succinyldihydrolipoyl]-L-lysyl-[protein] + CO2. Its function is as follows. E1 component of the 2-oxoglutarate dehydrogenase (OGDH) complex which catalyzes the decarboxylation of 2-oxoglutarate, the first step in the conversion of 2-oxoglutarate to succinyl-CoA and CO(2). The sequence is that of 2-oxoglutarate dehydrogenase E1 component from Staphylococcus aureus (strain JH9).